A 367-amino-acid chain; its full sequence is Carbamoyl phosphate synthase small chain (367 aa).

The CPSase stretch occupies residues 1-182 (MKLENKKGYL…PIFHPNTGDM (182 aa)). 3 residues coordinate L-glutamine: serine 50, glycine 230, and glycine 232. A Glutamine amidotransferase type-1 domain is found at 182–367 (MIVVVDCGIK…DKFRTMVTGK (186 aa)). The active-site Nucleophile is cysteine 258. L-glutamine is bound by residues leucine 259, glutamine 262, asparagine 300, glycine 302, and tyrosine 303. Active-site residues include histidine 343 and glutamate 345.

It belongs to the CarA family. As to quaternary structure, composed of two chains; the small (or glutamine) chain promotes the hydrolysis of glutamine to ammonia, which is used by the large (or ammonia) chain to synthesize carbamoyl phosphate. Tetramer of heterodimers (alpha,beta)4.

It catalyses the reaction hydrogencarbonate + L-glutamine + 2 ATP + H2O = carbamoyl phosphate + L-glutamate + 2 ADP + phosphate + 2 H(+). The enzyme catalyses L-glutamine + H2O = L-glutamate + NH4(+). It functions in the pathway amino-acid biosynthesis; L-arginine biosynthesis; carbamoyl phosphate from bicarbonate: step 1/1. The protein operates within pyrimidine metabolism; UMP biosynthesis via de novo pathway; (S)-dihydroorotate from bicarbonate: step 1/3. Small subunit of the glutamine-dependent carbamoyl phosphate synthetase (CPSase). CPSase catalyzes the formation of carbamoyl phosphate from the ammonia moiety of glutamine, carbonate, and phosphate donated by ATP, constituting the first step of 2 biosynthetic pathways, one leading to arginine and/or urea and the other to pyrimidine nucleotides. The small subunit (glutamine amidotransferase) binds and cleaves glutamine to supply the large subunit with the substrate ammonia. The sequence is that of Carbamoyl phosphate synthase small chain from Saccharolobus solfataricus (strain ATCC 35092 / DSM 1617 / JCM 11322 / P2) (Sulfolobus solfataricus).